A 473-amino-acid polypeptide reads, in one-letter code: Putative sulfoquinovose importer (473 aa).

A run of 11 helical transmembrane segments spans residues 18 to 38 (AYGV…LYLL), 45 to 65 (LGMP…FTAF), 88 to 108 (PFIL…FFAT), 110 to 130 (FTLP…GLFY), 160 to 180 (GGAT…QALF), 187 to 207 (GYLI…WWCF), 239 to 259 (LLVL…KLAI), 276 to 296 (WMGF…PAAV), 317 to 337 (ILNF…CIAF), 380 to 400 (ISAA…GYIP), and 415 to 435 (LIFL…GFFY).

The protein belongs to the sodium:galactoside symporter (TC 2.A.2) family.

The protein localises to the cell inner membrane. In terms of biological role, could be involved in sulfoquinovose import. The sequence is that of Putative sulfoquinovose importer (yihO) from Salmonella typhimurium (strain LT2 / SGSC1412 / ATCC 700720).